Reading from the N-terminus, the 265-residue chain is Hydroxyethylthiazole kinase (265 aa).

Methionine 50 serves as a coordination point for substrate. 2 residues coordinate ATP: arginine 125 and threonine 171. Glycine 198 serves as a coordination point for substrate.

This sequence belongs to the Thz kinase family. The cofactor is Mg(2+).

It catalyses the reaction 5-(2-hydroxyethyl)-4-methylthiazole + ATP = 4-methyl-5-(2-phosphooxyethyl)-thiazole + ADP + H(+). Its pathway is cofactor biosynthesis; thiamine diphosphate biosynthesis; 4-methyl-5-(2-phosphoethyl)-thiazole from 5-(2-hydroxyethyl)-4-methylthiazole: step 1/1. In terms of biological role, catalyzes the phosphorylation of the hydroxyl group of 4-methyl-5-beta-hydroxyethylthiazole (THZ). The sequence is that of Hydroxyethylthiazole kinase from Salmonella typhimurium (strain LT2 / SGSC1412 / ATCC 700720).